We begin with the raw amino-acid sequence, 535 residues long: Peptide chain release factor 3 (535 aa).

Residues 8-278 (ARRRTFAIIS…VDQAPAPGPR (271 aa)) form the tr-type G domain. GTP contacts are provided by residues 17-24 (SHPDAGKT), 85-89 (DTPGH), and 139-142 (NKLD).

It belongs to the TRAFAC class translation factor GTPase superfamily. Classic translation factor GTPase family. PrfC subfamily.

It is found in the cytoplasm. Increases the formation of ribosomal termination complexes and stimulates activities of RF-1 and RF-2. It binds guanine nucleotides and has strong preference for UGA stop codons. It may interact directly with the ribosome. The stimulation of RF-1 and RF-2 is significantly reduced by GTP and GDP, but not by GMP. The chain is Peptide chain release factor 3 from Bordetella bronchiseptica (strain ATCC BAA-588 / NCTC 13252 / RB50) (Alcaligenes bronchisepticus).